Reading from the N-terminus, the 173-residue chain is Cytochrome c-type biogenesis protein CcmE (173 aa).

The Cytoplasmic segment spans residues 1–8 (MNPRRKSR). The helical; Signal-anchor for type II membrane protein transmembrane segment at 9 to 29 (FKLVIFVVLGIAIASGLMLYA) threads the bilayer. Over 30 to 173 (LRQNIDLFYT…RDRQEKEGAK (144 aa)) the chain is Periplasmic. Heme-binding residues include His-131 and Tyr-135. Residues 152–173 (GIEAADLKGESARDRQEKEGAK) are disordered. Residues 156–173 (ADLKGESARDRQEKEGAK) are compositionally biased toward basic and acidic residues.

Belongs to the CcmE/CycJ family.

It is found in the cell inner membrane. In terms of biological role, heme chaperone required for the biogenesis of c-type cytochromes. Transiently binds heme delivered by CcmC and transfers the heme to apo-cytochromes in a process facilitated by CcmF and CcmH. In Haemophilus influenzae (strain ATCC 51907 / DSM 11121 / KW20 / Rd), this protein is Cytochrome c-type biogenesis protein CcmE.